Consider the following 81-residue polypeptide: MGQLCCFPFARDEGKICEKDRREPEDAELVRLSKRLVENAVLKAVQQYLEETQNKKQPGEGNSTKAEEGDRNGDGSDNNRK.

G2 carries N-myristoyl glycine lipidation. Residues 2-11 (GQLCCFPFAR) are required for membrane localization. S-palmitoyl cysteine attachment occurs at residues C5 and C6. Residues 29–42 (LVRLSKRLVENAVL) are RII-binding. Residues 49–81 (LEETQNKKQPGEGNSTKAEEGDRNGDGSDNNRK) form a disordered region. The segment covering 65–81 (KAEEGDRNGDGSDNNRK) has biased composition (basic and acidic residues).

As to quaternary structure, binds cAMP-dependent protein kinase (PKA). Interacts with PRKCA; only the cytoplasmic form is capable of interacting with PRKCA.

The protein resides in the lateral cell membrane. In terms of biological role, targets the cAMP-dependent protein kinase (PKA) to the plasma membrane, and permits functional coupling to the L-type calcium channel. The membrane-associated form reduces epithelial sodium channel (ENaC) activity, whereas the free cytoplasmic form may negatively regulate ENaC channel feedback inhibition by intracellular sodium. The sequence is that of A-kinase anchor protein 7 isoform alpha (Akap7) from Mus musculus (Mouse).